The following is a 120-amino-acid chain: Large ribosomal subunit protein uL18 (120 aa).

The protein belongs to the universal ribosomal protein uL18 family. As to quaternary structure, part of the 50S ribosomal subunit; part of the 5S rRNA/L5/L18/L25 subcomplex. Contacts the 5S and 23S rRNAs.

This is one of the proteins that bind and probably mediate the attachment of the 5S RNA into the large ribosomal subunit, where it forms part of the central protuberance. The chain is Large ribosomal subunit protein uL18 from Chloroherpeton thalassium (strain ATCC 35110 / GB-78).